The following is a 271-amino-acid chain: Glutamate racemase (271 aa).

Substrate contacts are provided by residues 10–11 (DS) and 42–43 (YG). Residue cysteine 73 is the Proton donor/acceptor of the active site. 74–75 (NT) contacts substrate. The active-site Proton donor/acceptor is cysteine 183. 184 to 185 (TH) contributes to the substrate binding site.

It belongs to the aspartate/glutamate racemases family.

It catalyses the reaction L-glutamate = D-glutamate. It participates in cell wall biogenesis; peptidoglycan biosynthesis. In terms of biological role, provides the (R)-glutamate required for cell wall biosynthesis. The protein is Glutamate racemase of Streptococcus thermophilus (strain CNRZ 1066).